The chain runs to 677 residues: Gamma-tubulin complex subunit mod21 (677 aa).

As to quaternary structure, component of the gamma-tubulin complex composed of at least alp4, alp6, alp16, ghf1, gtb1 and mod21.

It is found in the cytoplasm. It localises to the cytoskeleton. Its subcellular location is the microtubule organizing center. The protein localises to the spindle pole body. Component of the gamma-tubulin complex that is required for the regulation of both interphase microtubule organization and nucleation, and mitotic bipolar spindles. Required for correct septation. The polypeptide is Gamma-tubulin complex subunit mod21 (Schizosaccharomyces pombe (strain 972 / ATCC 24843) (Fission yeast)).